The chain runs to 315 residues: tRNA pseudouridine synthase B (315 aa).

Asp47 acts as the Nucleophile in catalysis.

This sequence belongs to the pseudouridine synthase TruB family. Type 1 subfamily.

It catalyses the reaction uridine(55) in tRNA = pseudouridine(55) in tRNA. Its function is as follows. Responsible for synthesis of pseudouridine from uracil-55 in the psi GC loop of transfer RNAs. In Shewanella amazonensis (strain ATCC BAA-1098 / SB2B), this protein is tRNA pseudouridine synthase B.